The following is a 159-amino-acid chain: Protein Smg homolog (159 aa).

It belongs to the Smg family.

The protein is Protein Smg homolog of Vibrio parahaemolyticus serotype O3:K6 (strain RIMD 2210633).